The sequence spans 554 residues: MASSQVGDMVNGNAEPTRHLAKFPPSLWGDRFTSFTLDKQLWDKYGNEIEVLKEQVRSMVVAGGRKAAEQINLINVLERLGVSYHFEKEIEEQLEQLFAKFEDNEDYDLFTIALHFRIFRQHGYKMSCDVFNKFRDSNGEFKETMSNDVQGMLSLYEATYLKIRGEGFLDEAHAFTIAQLESLVGGPHLSSDLSEQVMHALKQSIHRGFPRLEAKHFISFYEKDASRNETLLRLAKLDFNQLQLSHREELCHIFRWWKELDLISKVPYARDRAVECFFWSTCAYYEPQHFVGRAVLTKIMLLLSVTDDTYDAYGTYDELKLYTNAVQRWDVSAMDELPDYMKALYRALLNVYDEVERDLAKQGRDYGVHHSKEAFKEIVRSYEIEAEWFKEGYVASFEAYMKNALVTSTGRLHTTSCFMGLEADVATTEAFEWILTKPKMVAASGAIGRLVDDVMSHDEEQERGHVATGLDCYMKQHGVSKQEAIVELYKMIENAWRDINEEILKPTAISMKLLIRVLNLSRISDVVYKYVDGYTHPEIIKDHVISLFEDPIPM.

Mg(2+)-binding residues include Asp307 and Asp311. Residues 326–330 carry the DDXXD motif motif; it reads VQRWD. Asp452, Ser456, and Glu460 together coordinate Mg(2+).

It belongs to the terpene synthase family. The cofactor is Mg(2+).

It carries out the reaction (2E,6E)-farnesyl diphosphate + H2O = valerianol + diphosphate. The protein operates within secondary metabolite biosynthesis; terpenoid biosynthesis. Terpene synthase that catalyzes the biosynthesis of the terpene valerianol, which is a volatile compound of floral scent. This Camellia hiemalis (Camellia) protein is Valerianol synthase TPS1E.